A 387-amino-acid chain; its full sequence is Lipid-A-disaccharide synthase (387 aa).

The protein belongs to the LpxB family.

It catalyses the reaction 2-N,3-O-bis[(3R)-3-hydroxytetradecanoyl]-alpha-D-glucosaminyl 1-phosphate + UDP-2-N,3-O-bis[(3R)-3-hydroxytetradecanoyl]-alpha-D-glucosamine = lipid A disaccharide (E. coli) + UDP + H(+). The catalysed reaction is a lipid X + a UDP-2-N,3-O-bis[(3R)-3-hydroxyacyl]-alpha-D-glucosamine = a lipid A disaccharide + UDP + H(+). It participates in glycolipid biosynthesis; lipid IV(A) biosynthesis; lipid IV(A) from (3R)-3-hydroxytetradecanoyl-[acyl-carrier-protein] and UDP-N-acetyl-alpha-D-glucosamine: step 5/6. In terms of biological role, condensation of UDP-2,3-diacylglucosamine and 2,3-diacylglucosamine-1-phosphate to form lipid A disaccharide, a precursor of lipid A, a phosphorylated glycolipid that anchors the lipopolysaccharide to the outer membrane of the cell. The sequence is that of Lipid-A-disaccharide synthase from Blochmanniella pennsylvanica (strain BPEN).